Consider the following 251-residue polypeptide: tRNA (guanine-N(7)-)-methyltransferase (251 aa).

S-adenosyl-L-methionine-binding residues include glutamate 80, glutamate 105, aspartate 132, and aspartate 155. Aspartate 155 is a catalytic residue. Residues lysine 159, aspartate 191, and 228–231 (TKFE) each bind substrate.

Belongs to the class I-like SAM-binding methyltransferase superfamily. TrmB family.

The enzyme catalyses guanosine(46) in tRNA + S-adenosyl-L-methionine = N(7)-methylguanosine(46) in tRNA + S-adenosyl-L-homocysteine. It functions in the pathway tRNA modification; N(7)-methylguanine-tRNA biosynthesis. Functionally, catalyzes the formation of N(7)-methylguanine at position 46 (m7G46) in tRNA. In Histophilus somni (strain 2336) (Haemophilus somnus), this protein is tRNA (guanine-N(7)-)-methyltransferase.